Consider the following 1048-residue polypeptide: Platelet-derived growth factor receptor beta (1048 aa).

The N-terminal stretch at 1–30 is a signal peptide; it reads MLRASAMRAAVLHLTVALAALLSSCTTVSC. The Extracellular segment spans residues 31–528; the sequence is LKIVPEEKQL…LVSSSLFSQV (498 aa). Residues 35 to 124 form the Ig-like C2-type 1 domain; it reads PEEKQLILAE…EIKEVAVFVP (90 aa). Disulfide bonds link Cys-52–Cys-108 and Cys-153–Cys-194. 4 N-linked (GlcNAc...) asparagine glycosylation sites follow: Asn-87, Asn-159, Asn-224, and Asn-239. Ig-like C2-type domains lie at 216 to 309 and 319 to 406; these read PEDI…ASVN and AVKS…KEVT. A disulfide bridge connects residues Cys-240 and Cys-293. N-linked (GlcNAc...) asparagine glycans are attached at residues Asn-309, Asn-327, and Asn-457. An intrachain disulfide couples Cys-434 to Cys-503. A helical transmembrane segment spans residues 529-549; it reads VLLAVVLTLVPIIIMSIIILI. The Cytoplasmic segment spans residues 550–1048; that stretch reads AVWKKKPRYE…PIPDPKPEKS (499 aa). Phosphotyrosine; by autocatalysis occurs at positions 558, 575, and 577. One can recognise a Protein kinase domain in the interval 596–957; sequence LVLGRTLGSG…FLVHCVGDML (362 aa). Residues 602–610 and Lys-630 each bind ATP; that span reads LGSGAFGRV. A phosphotyrosine; by autocatalysis mark is found at Tyr-735, Tyr-746, Tyr-758, Tyr-766, and Tyr-770. The active-site Proton acceptor is the Asp-821. Phosphotyrosine; by autocatalysis occurs at positions 852 and 1036.

The protein belongs to the protein kinase superfamily. Tyr protein kinase family. CSF-1/PDGF receptor subfamily. As to quaternary structure, interacts with homodimeric PDGFB and PDGFD, and with heterodimers formed by PDGFA and PDGFB. Monomer in the absence of bound ligand. Interaction with homodimeric PDGFB, heterodimers formed by PDGFA and PDGFB or homodimeric PDGFD, leads to receptor dimerization, where both PDGFRA homodimers and heterodimers with PDGFRB are observed. Post-translationally, ubiquitinated. After autophosphorylation, the receptor is polyubiquitinated, leading to its degradation. In terms of processing, autophosphorylated on tyrosine residues upon ligand binding. Autophosphorylation occurs in trans, i.e. one subunit of the dimeric receptor phosphorylates tyrosine residues on the other subunit.

It localises to the cell membrane. It is found in the cytoplasmic vesicle. Its subcellular location is the lysosome lumen. It carries out the reaction L-tyrosyl-[protein] + ATP = O-phospho-L-tyrosyl-[protein] + ADP + H(+). Present in an inactive conformation in the absence of bound ligand. Binding of PDGFB and/or PDGFD leads to dimerization and activation by autophosphorylation on tyrosine residues. Its function is as follows. Tyrosine-protein kinase that acts as a cell-surface receptor for homodimeric PDGFB and PDGFD and for heterodimers formed by PDGFA and PDGFB, and plays an essential role in the regulation of embryonic development, cell proliferation, survival, differentiation, chemotaxis and migration. Plays an essential role in blood vessel development by promoting proliferation, migration and recruitment of pericytes and smooth muscle cells to endothelial cells. Required for normal development of the cardiovascular system. Required for normal recruitment of pericytes (mesangial cells) in the kidney glomerulus, and for normal formation of a branched network of capillaries in kidney glomeruli. Promotes rearrangement of the actin cytoskeleton and the formation of membrane ruffles. Binding of its cognate ligands - homodimeric PDGFB, heterodimers formed by PDGFA and PDGFB or homodimeric PDGFD -leads to the activation of several signaling cascades; the response depends on the nature of the bound ligand and is modulated by the formation of heterodimers between PDGFRA and PDGFRB. Receptor signaling is down-regulated by protein phosphatases that dephosphorylate the receptor and its down-stream effectors, and by rapid internalization of the activated receptor. This chain is Platelet-derived growth factor receptor beta (pdgfrb), found in Takifugu rubripes (Japanese pufferfish).